The following is a 195-amino-acid chain: Cytochrome c oxidase assembly protein CtaG (195 aa).

Residues Met-1–Thr-9 are Cytoplasmic-facing. A helical; Signal-anchor for type II membrane protein transmembrane segment spans residues Val-10–Phe-30. At Tyr-31 to Asn-195 the chain is on the periplasmic side.

Belongs to the COX11/CtaG family.

It is found in the cell inner membrane. Exerts its effect at some terminal stage of cytochrome c oxidase synthesis, probably by being involved in the insertion of the copper B into subunit I. The chain is Cytochrome c oxidase assembly protein CtaG from Ruegeria sp. (strain TM1040) (Silicibacter sp.).